The sequence spans 156 residues: Large ribosomal subunit protein eL24 (156 aa).

The tract at residues 87-156 is disordered; it reads LELIKERRSQ…AFQKVHATSR (70 aa). Over residues 89–129 the composition is skewed to basic and acidic residues; that stretch reads LIKERRSQKPSDRKAARDVKLAKDKEAKKADKAARKAEKAK. Residues 130-147 are compositionally biased toward low complexity; the sequence is SAAAGAQSKVSKQQSKGA.

This sequence belongs to the eukaryotic ribosomal protein eL24 family.

This chain is Large ribosomal subunit protein eL24 (RPL24), found in Debaryomyces hansenii (strain ATCC 36239 / CBS 767 / BCRC 21394 / JCM 1990 / NBRC 0083 / IGC 2968) (Yeast).